The sequence spans 142 residues: Large ribosomal subunit protein uL11 (142 aa).

This sequence belongs to the universal ribosomal protein uL11 family. In terms of assembly, part of the ribosomal stalk of the 50S ribosomal subunit. Interacts with L10 and the large rRNA to form the base of the stalk. L10 forms an elongated spine to which L12 dimers bind in a sequential fashion forming a multimeric L10(L12)X complex. Post-translationally, one or more lysine residues are methylated.

Forms part of the ribosomal stalk which helps the ribosome interact with GTP-bound translation factors. In Rhodopseudomonas palustris (strain BisA53), this protein is Large ribosomal subunit protein uL11.